The primary structure comprises 317 residues: L-lactate dehydrogenase 1 (317 aa).

NAD(+) contacts are provided by residues Val17, Asp38, Lys43, Tyr69, and 83–84; that span reads GA. Positions 86 and 92 each coordinate substrate. NAD(+) is bound by residues Ser105, 122 to 124, and Ser147; that span reads ATN. 124-127 contributes to the substrate binding site; it reads NPVD. 152–155 is a substrate binding site; the sequence is DSAR. Catalysis depends on His179, which acts as the Proton acceptor. At Tyr223 the chain carries Phosphotyrosine. Substrate is bound at residue Thr232.

This sequence belongs to the LDH/MDH superfamily. LDH family. Homotetramer.

Its subcellular location is the cytoplasm. The catalysed reaction is (S)-lactate + NAD(+) = pyruvate + NADH + H(+). Its pathway is fermentation; pyruvate fermentation to lactate; (S)-lactate from pyruvate: step 1/1. Catalyzes the conversion of lactate to pyruvate (Potential). Appears to be the primary factor that allows S.aureus growth during nitrosative stress in both aerobically and anaerobically cultured cells. The protein is L-lactate dehydrogenase 1 of Staphylococcus aureus (strain bovine RF122 / ET3-1).